The following is a 423-amino-acid chain: ER-bound oxygenase mpaB' (423 aa).

At 1 to 22 (MSLSLPPALSELARALPYSRTQ) the chain is on the lumenal side. Residues 23 to 41 (WLPILVGFLIGYPLLIKAL) traverse the membrane as a helical segment. Residues 42 to 423 (RYKRLGEMKK…ISRTGKCPFH (382 aa)) are Cytoplasmic-facing.

The protein belongs to the mpaB oxygenase family.

The protein resides in the endoplasmic reticulum membrane. The catalysed reaction is 4-farnesyl-3,5-dihydroxy-6-methylphthalide + AH2 + 2 O2 = (4E,8E)-10-(4,6-dihydroxy-7-methyl-3-oxo-1,3-dihydro-2-benzofuran-5-yl)-4,8-dimethyldeca-4,8-dienoate + acetone + A + H2O + H(+). The protein operates within secondary metabolite biosynthesis; terpenoid biosynthesis. Its function is as follows. ER-bound oxygenase; part of the gene cluster that mediates the biosynthesis of mycophenolic acid (MPA), the first isolated antibiotic natural product in the world obtained from a culture of Penicillium brevicompactum in 1893. MpaB' catalyzes the oxidative cleavage the C19-C20 double bond in farnesyl-DHMP (FDHMP) to yield FDHMP-3C via a mycophenolic aldehyde intermediate. The first step of the pathway is the synthesis of 5-methylorsellinic acid (5MOA) by the cytosolic polyketide synthase mpaC. 5MOA is then converted to the phthalide compound 5,7-dihydroxy-4,6-dimethylphthalide (DHMP) by the endoplasmic reticulum-bound cytochrome P450 monooxygenase mpaDE. MpaDE first catalyzes hydroxylation of 5-MOA to 4,6-dihydroxy-2-(hydroxymethyl)-3-methylbenzoic acid (DHMB). MpaDE then acts as a lactone synthase that catalyzes the ring closure to convert DHMB into DHMP. The next step is the prenylation of DHMP by the Golgi apparatus-associated prenyltransferase mpaA to yield farnesyl-DHMP (FDHMP). The ER-bound oxygenase mpaB then mediates the oxidative cleavage the C19-C20 double bond in FDHMP to yield FDHMP-3C via a mycophenolic aldehyde intermediate. The O-methyltransferase mpaG catalyzes the methylation of FDHMP-3C to yield MFDHMP-3C. After the cytosolic methylation of FDHMP-3C, MFDHMP-3C enters into peroxisomes probably via free diffusion due to its low molecular weight. Upon a peroxisomal CoA ligation reaction, catalyzed by a beta-oxidation component enzyme acyl-CoA ligase ACL891, MFDHMP-3C-CoA would then be restricted to peroxisomes for the following beta-oxidation pathway steps. The peroxisomal beta-oxidation machinery than converts MFDHMP-3C-CoA into MPA_CoA, via a beta-oxidation chain-shortening process. Finally mpaH acts as a peroxisomal acyl-CoA hydrolase with high substrate specificity toward MPA-CoA to release the final product MPA. The chain is ER-bound oxygenase mpaB' from Penicillium brevicompactum.